The primary structure comprises 605 residues: Probable potassium transport system protein Kup (605 aa).

12 helical membrane passes run 17 to 37 (GLVF…IFAL), 45 to 65 (VFGI…VEYA), 96 to 116 (IAFV…DGVI), 140 to 160 (LGTL…FQFK), 165 to 185 (VAAA…VSGL), 211 to 231 (GISA…GEAL), 246 to 266 (AWYF…AFAL), 286 to 306 (LYIP…QALI), 338 to 358 (IYIG…MLIF), 367 to 387 (AYGL…TIIF), 394 to 414 (WKVP…ISNL), and 417 to 437 (LPHG…TILI).

It belongs to the HAK/KUP transporter (TC 2.A.72) family.

It localises to the cell inner membrane. It catalyses the reaction K(+)(in) + H(+)(in) = K(+)(out) + H(+)(out). Functionally, transport of potassium into the cell. Likely operates as a K(+):H(+) symporter. This is Probable potassium transport system protein Kup from Geotalea uraniireducens (strain Rf4) (Geobacter uraniireducens).